The following is a 208-amino-acid chain: Transmembrane protein 160 (208 aa).

Residues 1–45 (MASIRWLMGSRLSRFVCPFAQLVRQPVLRYVRPPVRALHRGSVRR) constitute a mitochondrion transit peptide. The next 3 membrane-spanning stretches (helical) occupy residues 82-102 (GFLS…IAFV), 110-130 (AGYA…ASYV), and 147-167 (VLLH…AVSL). The segment covering 181–192 (DDEEHGADESSE) has biased composition (acidic residues). The tract at residues 181-208 (DDEEHGADESSECAECRARRDREKGQDK) is disordered. Residues 194 to 208 (AECRARRDREKGQDK) are compositionally biased toward basic and acidic residues.

Belongs to the TMEM160 family.

It is found in the mitochondrion inner membrane. The polypeptide is Transmembrane protein 160 (Danio rerio (Zebrafish)).